A 318-amino-acid chain; its full sequence is NADH-ubiquinone oxidoreductase chain 1 (318 aa).

8 consecutive transmembrane segments (helical) span residues 2-22 (FFIN…FLTL), 70-90 (MFIL…IPLP), 100-120 (LGVL…LWSG), 147-167 (AIIL…TLII), 171-191 (HMWL…STLA), 223-243 (FFLA…ILFF), 253-273 (ELYS…FLWI), and 294-314 (LPLT…TASI).

It belongs to the complex I subunit 1 family. In terms of assembly, core subunit of respiratory chain NADH dehydrogenase (Complex I) which is composed of 45 different subunits.

The protein localises to the mitochondrion inner membrane. The catalysed reaction is a ubiquinone + NADH + 5 H(+)(in) = a ubiquinol + NAD(+) + 4 H(+)(out). Its function is as follows. Core subunit of the mitochondrial membrane respiratory chain NADH dehydrogenase (Complex I) which catalyzes electron transfer from NADH through the respiratory chain, using ubiquinone as an electron acceptor. Essential for the catalytic activity and assembly of complex I. The polypeptide is NADH-ubiquinone oxidoreductase chain 1 (MT-ND1) (Canis lupus familiaris (Dog)).